Reading from the N-terminus, the 450-residue chain is MSEVTITGFRSRDVRFPTSLDKTGSDAMNAAGDYSAAYCILETDSAHSGHGMTFTIGRGNDIVCAAINHVADRLKGKKLSSLVADWGKTWRYLVNDSQLRWIGPEKGVIHLALGAVVNAVWDLWAKTLNKPVWRIVADMTPEEYVRCIDFRYITDAITPEEAVAMLREQEAGKAKRIEEALQNRAVPAYTTSAGWLGYGEDKMKQLLRETLAAGYRHFKVKVGGSVEEDRRRLGIAREILGFDKGNVLMVDANQVWSVPEAIDYMKQLSEYKPWFIEEPTSPDDIMGHKAIRDALKPYGIGVATGEMCQNRVMFKQLIMTGAIDICQIDACRLGGVNEVLAVLLMAKKYGVPIVPHSGGVGLPEYTQHLSTIDYVVVSGKLSVLEFVDHLHEHFLHPSVIKDGYYQTPTEAGYSVEMKPESMDKYEYPGKKGVSWWTTDEALPILNGEKI.

Lys221 is an active-site residue. Mg(2+)-binding residues include Asp251, Glu277, and Glu306. The active site involves His356.

It belongs to the mandelate racemase/muconate lactonizing enzyme family. It depends on Mg(2+) as a cofactor.

It carries out the reaction L-galactonate = 2-dehydro-3-deoxy-L-galactonate + H2O. Its pathway is carbohydrate acid metabolism. Functionally, mediates the conversion of L-galactonate to 2-dehydro-3-deoxy-L-galactonate, the second step in D-galacturonate catabolic process. This Hypocrea jecorina (Trichoderma reesei) protein is L-galactonate dehydratase (lgd1).